The following is a 128-amino-acid chain: Small ribosomal subunit protein uS13 (128 aa).

Residues 95 to 118 (GLPVRGQRTHTNARTRKGPKKGLV) are compositionally biased toward basic residues. The interval 95–128 (GLPVRGQRTHTNARTRKGPKKGLVRKAAAPAPKA) is disordered.

This sequence belongs to the universal ribosomal protein uS13 family. Part of the 30S ribosomal subunit. Forms a loose heterodimer with protein S19. Forms two bridges to the 50S subunit in the 70S ribosome.

Functionally, located at the top of the head of the 30S subunit, it contacts several helices of the 16S rRNA. In the 70S ribosome it contacts the 23S rRNA (bridge B1a) and protein L5 of the 50S subunit (bridge B1b), connecting the 2 subunits; these bridges are implicated in subunit movement. Contacts the tRNAs in the A and P-sites. This Anaeromyxobacter sp. (strain K) protein is Small ribosomal subunit protein uS13.